A 632-amino-acid polypeptide reads, in one-letter code: tRNA uridine 5-carboxymethylaminomethyl modification enzyme MnmG (632 aa).

FAD contacts are provided by residues 15–20 (GAGHAG), Ile127, and Ser182. 276 to 290 (GPRYCPSIEDKIVRF) contacts NAD(+). An FAD-binding site is contributed by Gln373.

The protein belongs to the MnmG family. Homodimer. Heterotetramer of two MnmE and two MnmG subunits. The cofactor is FAD.

The protein resides in the cytoplasm. Functionally, NAD-binding protein involved in the addition of a carboxymethylaminomethyl (cmnm) group at the wobble position (U34) of certain tRNAs, forming tRNA-cmnm(5)s(2)U34. This is tRNA uridine 5-carboxymethylaminomethyl modification enzyme MnmG from Streptococcus pyogenes serotype M18 (strain MGAS8232).